A 427-amino-acid chain; its full sequence is MKTLIKNGKIIKKENQLIEAALWLENGVIHAIGESFDEADFEQVFDANGQLITPGLVDVHVHFREPGFTYKETIKTGSKAAARGGFTTVCAMPNLNPVPDTAEKLSEVYDLIQKDAVVKVLQYAPITEELRSEVLTNQKALKEAGAFAFTNDGVGVQTAGTMYLAMKEAAALNMALVAHTEDESLLFGGVMHEGEVSKKLGLPGILSATEASQIARDITLAKETGVHYHVCHVSTEESVRVIRDAKKAGIHVTAEVSPHHLILVDEDIPGDEGFWKMNPPLRGLADRQALIDGLLDGTIDCIATDHAPHGLEEKQQSFLNAPFGIVGSETAFQLIYTNFVETGIFTLEQVIDWMAVKPAEIFGLNAGTLTIGAPADIAVFDLATAAPIDAEAFESMAVNTPFTGWTVKGKTLMTFVDGALAWSEEAQ.

Positions 60 and 62 each coordinate Zn(2+). Substrate is bound by residues 62–64 (HFR) and Asn94. 3 residues coordinate Zn(2+): Asp152, His179, and His232. Residue Asn278 coordinates substrate. Asp305 is a binding site for Zn(2+). Asp305 is an active-site residue. Substrate contacts are provided by residues His309 and 323–324 (FG).

It belongs to the metallo-dependent hydrolases superfamily. DHOase family. Class I DHOase subfamily. The cofactor is Zn(2+).

The catalysed reaction is (S)-dihydroorotate + H2O = N-carbamoyl-L-aspartate + H(+). Its pathway is pyrimidine metabolism; UMP biosynthesis via de novo pathway; (S)-dihydroorotate from bicarbonate: step 3/3. Catalyzes the reversible cyclization of carbamoyl aspartate to dihydroorotate. The protein is Dihydroorotase of Enterococcus faecalis (strain ATCC 700802 / V583).